A 411-amino-acid chain; its full sequence is Imidazolonepropionase (411 aa).

Fe(3+)-binding residues include H78 and H80. The Zn(2+) site is built by H78 and H80. The 4-imidazolone-5-propanoate site is built by R87, Y150, and H183. Y150 contributes to the N-formimidoyl-L-glutamate binding site. H248 lines the Fe(3+) pocket. A Zn(2+)-binding site is contributed by H248. Q251 serves as a coordination point for 4-imidazolone-5-propanoate. D322 lines the Fe(3+) pocket. D322 lines the Zn(2+) pocket. Residues N324 and G326 each coordinate N-formimidoyl-L-glutamate. S327 is a binding site for 4-imidazolone-5-propanoate.

This sequence belongs to the metallo-dependent hydrolases superfamily. HutI family. It depends on Zn(2+) as a cofactor. Fe(3+) is required as a cofactor.

Its subcellular location is the cytoplasm. The enzyme catalyses 4-imidazolone-5-propanoate + H2O = N-formimidoyl-L-glutamate. The protein operates within amino-acid degradation; L-histidine degradation into L-glutamate; N-formimidoyl-L-glutamate from L-histidine: step 3/3. In terms of biological role, catalyzes the hydrolytic cleavage of the carbon-nitrogen bond in imidazolone-5-propanoate to yield N-formimidoyl-L-glutamate. It is the third step in the universal histidine degradation pathway. This Christiangramia forsetii (strain DSM 17595 / CGMCC 1.15422 / KT0803) (Gramella forsetii) protein is Imidazolonepropionase.